Consider the following 309-residue polypeptide: MSIRIIPQDELGSSEKRTADMIPPLLFPRLKNLYNRRAERLRELAENNPLGDYLRFAALIAHAQEVVLYDHPLEMDLTARIKEASAQGKPPLDIHVLPRDKHWQKLLMALIAELKPEMSGPALAVIENLEKASTQELEDMASALFASDFSSVSSDKAPFIWAALSLYWAQMANLIPGKARAEYGEQRQYCPVCGSMPVSSMVQIGTTQGLRYLRCNLCETEWHVVRVKCSNCEQSGKLHYWSLDDEQAAIKAESCDDCGTYLKILYQEKEPKVEAVADDLASLVLDARMEQEGYARSSINPFLFPGEGE.

This sequence belongs to the FdhE family.

It is found in the cytoplasm. Necessary for formate dehydrogenase activity. This is Protein FdhE from Escherichia coli O127:H6 (strain E2348/69 / EPEC).